Consider the following 154-residue polypeptide: MINNKVNVSLSKDLRKKYGIRRFPVAKGDIVKIISGSRKGEGGKVVDVDHKTMKVSIEGVTISKADGKQVPFFIDHSNISITKLDLSRNDRYERLREIAARKNLPPPEVPEETSNDTKESDENVTGADKEETNEIKEEDLNDNEDKNNDGSQEA.

The interval 97–154 (EIAARKNLPPPEVPEETSNDTKESDENVTGADKEETNEIKEEDLNDNEDKNNDGSQEA) is disordered. The segment covering 115–135 (NDTKESDENVTGADKEETNEI) has biased composition (basic and acidic residues).

This sequence belongs to the universal ribosomal protein uL24 family. Part of the 50S ribosomal subunit.

One of two assembly initiator proteins, it binds directly to the 5'-end of the 23S rRNA, where it nucleates assembly of the 50S subunit. Functionally, located at the polypeptide exit tunnel on the outside of the subunit. This chain is Large ribosomal subunit protein uL24, found in Picrophilus torridus (strain ATCC 700027 / DSM 9790 / JCM 10055 / NBRC 100828 / KAW 2/3).